The chain runs to 268 residues: ClpXP adapter protein SpxH (268 aa).

The protein belongs to the SpxH family. As to quaternary structure, interacts with Spx.

It localises to the cytoplasm. Adapter protein required for efficient degradation of Spx by ClpXP under non-stress conditions. Interaction with Spx stabilizes Spx and exposes the C-terminus of Spx for recognition and proteolysis by ClpXP. This Staphylococcus aureus (strain COL) protein is ClpXP adapter protein SpxH.